The chain runs to 480 residues: NADH-quinone oxidoreductase subunit N (480 aa).

13 helical membrane-spanning segments follow: residues 13-33, 41-61, 81-101, 107-127, 132-152, 167-187, 212-232, 245-265, 276-296, 314-334, 373-393, 413-433, and 454-474; these read ISPMLILCGVALLSLVVQFLI, PLWVLSILGILVAMYALYHTT, VWLSAIYLIAGLITLLVAPPF, TLFPEFFPLMLFCLSGMMFLT, LIVIFVGLEILSLSLYVMIGM, FLLGTFSSGFMLLGIAFLYGG, LGLGLFFVGVSFKAALVPFHS, ITGFMASAGKASALGLVIILF, VWKYLMGTIALISMTWGNIVA, AGYIVAGIACGAGLEALYYLF, ALALSLVFLSFAGFPPLIGFW, LLFGAVANSCIAFYYYMKITI, and PTLGFLIFLLCVFFTAGWIFF.

It belongs to the complex I subunit 2 family. NDH-1 is composed of 14 different subunits. Subunits NuoA, H, J, K, L, M, N constitute the membrane sector of the complex.

Its subcellular location is the cell inner membrane. It carries out the reaction a quinone + NADH + 5 H(+)(in) = a quinol + NAD(+) + 4 H(+)(out). NDH-1 shuttles electrons from NADH, via FMN and iron-sulfur (Fe-S) centers, to quinones in the respiratory chain. The immediate electron acceptor for the enzyme in this species is believed to be ubiquinone. Couples the redox reaction to proton translocation (for every two electrons transferred, four hydrogen ions are translocated across the cytoplasmic membrane), and thus conserves the redox energy in a proton gradient. The polypeptide is NADH-quinone oxidoreductase subunit N (Leptospira biflexa serovar Patoc (strain Patoc 1 / Ames)).